A 503-amino-acid polypeptide reads, in one-letter code: Arabinose import ATP-binding protein AraG 1 (503 aa).

2 consecutive ABC transporter domains span residues 5–240 (LRFD…MVGR) and 251–497 (RALG…LPQT). ATP is bound at residue 37–44 (GENGAGKS).

It belongs to the ABC transporter superfamily. Arabinose importer (TC 3.A.1.2.2) family. As to quaternary structure, the complex is composed of two ATP-binding proteins (AraG), two transmembrane proteins (AraH) and a solute-binding protein (AraF).

The protein resides in the cell inner membrane. It carries out the reaction L-arabinose(out) + ATP + H2O = L-arabinose(in) + ADP + phosphate + H(+). Part of the ABC transporter complex AraFGH involved in arabinose import. Responsible for energy coupling to the transport system. The polypeptide is Arabinose import ATP-binding protein AraG 1 (Burkholderia ambifaria (strain ATCC BAA-244 / DSM 16087 / CCUG 44356 / LMG 19182 / AMMD) (Burkholderia cepacia (strain AMMD))).